The primary structure comprises 669 residues: Threonine--tRNA ligase (669 aa).

In terms of domain architecture, TGS spans 3-60 (DAQQITLLVDGEETKVTTGTTGAELFFERRDVVVARVNGELKDLDQELPEGAEVEGVT). Residues 260 to 566 (DHRKLGSELD…LTEHYAGAFP (307 aa)) form a catalytic region. Zn(2+) contacts are provided by cysteine 365, histidine 416, and histidine 543.

It belongs to the class-II aminoacyl-tRNA synthetase family. Homodimer. Zn(2+) is required as a cofactor.

It is found in the cytoplasm. The enzyme catalyses tRNA(Thr) + L-threonine + ATP = L-threonyl-tRNA(Thr) + AMP + diphosphate + H(+). In terms of biological role, catalyzes the attachment of threonine to tRNA(Thr) in a two-step reaction: L-threonine is first activated by ATP to form Thr-AMP and then transferred to the acceptor end of tRNA(Thr). Also edits incorrectly charged L-seryl-tRNA(Thr). The chain is Threonine--tRNA ligase from Pseudarthrobacter chlorophenolicus (strain ATCC 700700 / DSM 12829 / CIP 107037 / JCM 12360 / KCTC 9906 / NCIMB 13794 / A6) (Arthrobacter chlorophenolicus).